Reading from the N-terminus, the 305-residue chain is Dermonecrotic toxin LiSicTox-betaID1 (305 aa).

A signal peptide spans 1 to 18; that stretch reads MQLFIILCLAGSAVQLEG. Positions 19-26 are excised as a propeptide; it reads TELDGVER. The active site involves His38. Residues Glu58 and Asp60 each coordinate Mg(2+). The active-site Nucleophile is His74. 2 cysteine pairs are disulfide-bonded: Cys78-Cys84 and Cys80-Cys223. Asp118 provides a ligand contact to Mg(2+).

It belongs to the arthropod phospholipase D family. Class II subfamily. Class IIb sub-subfamily. Mg(2+) is required as a cofactor. As to expression, expressed by the venom gland.

It localises to the secreted. It catalyses the reaction an N-(acyl)-sphingosylphosphocholine = an N-(acyl)-sphingosyl-1,3-cyclic phosphate + choline. It carries out the reaction an N-(acyl)-sphingosylphosphoethanolamine = an N-(acyl)-sphingosyl-1,3-cyclic phosphate + ethanolamine. The catalysed reaction is a 1-acyl-sn-glycero-3-phosphocholine = a 1-acyl-sn-glycero-2,3-cyclic phosphate + choline. The enzyme catalyses a 1-acyl-sn-glycero-3-phosphoethanolamine = a 1-acyl-sn-glycero-2,3-cyclic phosphate + ethanolamine. In terms of biological role, dermonecrotic toxins cleave the phosphodiester linkage between the phosphate and headgroup of certain phospholipids (sphingolipid and lysolipid substrates), forming an alcohol (often choline) and a cyclic phosphate. This toxin acts on sphingomyelin (SM) with low activity. It may also act on ceramide phosphoethanolamine (CPE), lysophosphatidylcholine (LPC) and lysophosphatidylethanolamine (LPE), but not on lysophosphatidylserine (LPS), and lysophosphatidylglycerol (LPG). It acts by transphosphatidylation, releasing exclusively cyclic phosphate products as second products. Has no or weak activities in inducing dermonecrosis, hemolysis, inflammatory response, platelet aggregation and increase in vessel permeability. In vivo, shows no lethality when injected at higher dose into mice. This chain is Dermonecrotic toxin LiSicTox-betaID1, found in Loxosceles intermedia (Brown spider).